We begin with the raw amino-acid sequence, 313 residues long: ADP-L-glycero-D-manno-heptose-6-epimerase (313 aa).

Residues 10–11 (MI), 31–32 (DN), lysine 38, lysine 53, 75–79 (EGACS), and asparagine 92 contribute to the NADP(+) site. Tyrosine 139 (proton acceptor) is an active-site residue. Lysine 143 serves as a coordination point for NADP(+). Substrate is bound at residue asparagine 174. Positions 175 and 183 each coordinate NADP(+). The active-site Proton acceptor is the lysine 183. Substrate is bound by residues serine 185, histidine 192, 206 to 209 (FEGS), arginine 214, and tyrosine 277.

Belongs to the NAD(P)-dependent epimerase/dehydratase family. HldD subfamily. As to quaternary structure, homopentamer. NADP(+) serves as cofactor.

The enzyme catalyses ADP-D-glycero-beta-D-manno-heptose = ADP-L-glycero-beta-D-manno-heptose. It participates in nucleotide-sugar biosynthesis; ADP-L-glycero-beta-D-manno-heptose biosynthesis; ADP-L-glycero-beta-D-manno-heptose from D-glycero-beta-D-manno-heptose 7-phosphate: step 4/4. Catalyzes the interconversion between ADP-D-glycero-beta-D-manno-heptose and ADP-L-glycero-beta-D-manno-heptose via an epimerization at carbon 6 of the heptose. The chain is ADP-L-glycero-D-manno-heptose-6-epimerase from Aliivibrio fischeri (strain ATCC 700601 / ES114) (Vibrio fischeri).